The following is a 275-amino-acid chain: NH(3)-dependent NAD(+) synthetase (275 aa).

Residue 50–57 (GISGGVDS) coordinates ATP. Asp56 serves as a coordination point for Mg(2+). Position 147 (Arg147) interacts with deamido-NAD(+). Thr167 contributes to the ATP binding site. Position 172 (Glu172) interacts with Mg(2+). Deamido-NAD(+)-binding residues include Lys180 and Asp187. Positions 196 and 218 each coordinate ATP. 267-268 (HK) provides a ligand contact to deamido-NAD(+).

Belongs to the NAD synthetase family. Homodimer.

The enzyme catalyses deamido-NAD(+) + NH4(+) + ATP = AMP + diphosphate + NAD(+) + H(+). The protein operates within cofactor biosynthesis; NAD(+) biosynthesis; NAD(+) from deamido-NAD(+) (ammonia route): step 1/1. In terms of biological role, catalyzes the ATP-dependent amidation of deamido-NAD to form NAD. Uses ammonia as a nitrogen source. This Ectopseudomonas mendocina (strain ymp) (Pseudomonas mendocina) protein is NH(3)-dependent NAD(+) synthetase.